The primary structure comprises 176 residues: Large ribosomal subunit protein uL22z (176 aa).

Residues 154–163 are compositionally biased toward basic and acidic residues; it reads KEEPVKKEPE. The disordered stretch occupies residues 154–176; the sequence is KEEPVKKEPETQLAAKSKKGASS.

It belongs to the universal ribosomal protein uL22 family.

This chain is Large ribosomal subunit protein uL22z (RPL17A), found in Arabidopsis thaliana (Mouse-ear cress).